Reading from the N-terminus, the 420-residue chain is UDP-N-acetylglucosamine 1-carboxyvinyltransferase (420 aa).

Phosphoenolpyruvate is bound at residue 23–24; that stretch reads KN. Position 92 (Arg-92) interacts with UDP-N-acetyl-alpha-D-glucosamine. The active-site Proton donor is Cys-116. Residue Cys-116 is modified to 2-(S-cysteinyl)pyruvic acid O-phosphothioketal. UDP-N-acetyl-alpha-D-glucosamine contacts are provided by residues 121 to 125, 161 to 164, Asp-306, and Ile-328; these read RPVDL and KVSV.

This sequence belongs to the EPSP synthase family. MurA subfamily.

The protein resides in the cytoplasm. The catalysed reaction is phosphoenolpyruvate + UDP-N-acetyl-alpha-D-glucosamine = UDP-N-acetyl-3-O-(1-carboxyvinyl)-alpha-D-glucosamine + phosphate. The protein operates within cell wall biogenesis; peptidoglycan biosynthesis. In terms of biological role, cell wall formation. Adds enolpyruvyl to UDP-N-acetylglucosamine. The protein is UDP-N-acetylglucosamine 1-carboxyvinyltransferase of Photobacterium profundum (strain SS9).